A 142-amino-acid chain; its full sequence is Nucleoside diphosphate kinase (142 aa).

ATP is bound by residues K11, F59, R87, T93, R104, and N114. Residue H117 is the Pros-phosphohistidine intermediate of the active site.

This sequence belongs to the NDK family. Homotetramer. Mg(2+) serves as cofactor.

The protein resides in the cytoplasm. The enzyme catalyses dZDP + ATP = dZTP + ADP. It carries out the reaction a 2'-deoxyribonucleoside 5'-diphosphate + ATP = a 2'-deoxyribonucleoside 5'-triphosphate + ADP. It catalyses the reaction a ribonucleoside 5'-diphosphate + ATP = a ribonucleoside 5'-triphosphate + ADP. It participates in purine metabolism. Functionally, major role in the synthesis of nucleoside triphosphates other than ATP. The ATP gamma phosphate is transferred to the NDP beta phosphate via a ping-pong mechanism, using a phosphorylated active-site intermediate. In terms of biological role, (Microbial infection) Catalyzes the phosphorylation of dZDP to dZTP, when the bacterium is infected by a phage that produces the substrate for the synthesis of dZTP (2- amino-2'-deoxyadenosine 5'-triphosphate), which is then used by the phage as a DNA polymerase substrate. The chain is Nucleoside diphosphate kinase from Vibrio cholerae serotype O1 (strain ATCC 39315 / El Tor Inaba N16961).